The sequence spans 116 residues: MCDQTKHSKCCPAKGNQCCPPQQNQCCQSKGNQCCPPKQNQCCQPKGSQCCPPKHNHCCQPKPPCCIQARCCGLETKPEVSPLNMESEPNSPQTQDKGCQTQQQPHSPQNESRPSK.

7 consecutive repeat copies span residues 6-13 (KHSKCCPA), 14-21 (KGNQCCPP), 30-37 (KGNQCCPP), 38-45 (KQNQCCQP), 46-53 (KGSQCCPP), 54-61 (KHNHCCQP), and 62-68 (KPPCCIQ). A 7 X 7 (OR 8) AA approximate repeats region spans residues 6–68 (KHSKCCPAKG…CQPKPPCCIQ (63 aa)). Positions 80-116 (VSPLNMESEPNSPQTQDKGCQTQQQPHSPQNESRPSK) are disordered. Residues 93-104 (QTQDKGCQTQQQ) show a composition bias toward low complexity. A compositionally biased stretch (polar residues) spans 105–116 (PHSPQNESRPSK).

In terms of tissue distribution, testis. Is selectively expressed in the spermatids of seminiferous tubules.

Its subcellular location is the cytoplasm. It is found in the mitochondrion membrane. Involved in sperm motility. Its absence is associated with genetic background dependent male infertility. Infertility may be due to reduced sperm motility in the female reproductive tract and inability to penetrate the oocyte zona pellucida. The chain is Sperm mitochondrial-associated cysteine-rich protein (SMCP) from Homo sapiens (Human).